Here is a 437-residue protein sequence, read N- to C-terminus: Exosome complex component RRP45 (437 aa).

Phosphoserine is present on Ser65. Lys297 bears the N6-acetyllysine; alternate mark. Lys297 participates in a covalent cross-link: Glycyl lysine isopeptide (Lys-Gly) (interchain with G-Cter in SUMO1); alternate. Lys297 participates in a covalent cross-link: Glycyl lysine isopeptide (Lys-Gly) (interchain with G-Cter in SUMO2); alternate. Phosphoserine is present on residues Ser306 and Ser346. The interval 339–437 (IGEGIENSWG…KRRKKKRTAN (99 aa)) is disordered. A compositionally biased stretch (acidic residues) spans 349-363 (DLEDSEKEEEEEGGI). Ser392, Ser394, and Ser407 each carry phosphoserine. Over residues 413 to 425 (AQTSANQKAPSKS) the composition is skewed to polar residues. Basic residues predominate over residues 426–437 (QGKRRKKKRTAN).

Belongs to the RNase PH family. As to quaternary structure, component of the RNA exosome core complex (Exo-9), composed of EXOSC1, EXOSC2, EXOSC3, EXOSC4, EXOSC5, EXOSC6, EXOSC7, EXOSC8 and EXOSC9; within the complex interacts with EXOSC3, EXOSC4, EXOSC5 and DIS3. The catalytically inactive RNA exosome core complex (Exo-9) associates with the catalytic subunit EXOSC10/RRP6. Exo-9 may associate with DIS3 to form the nucleolar exosome complex, or DIS3L to form the cytoplasmic exosome complex. Exo-9 is formed by a hexameric base ring consisting of the heterodimers EXOSC4-EXOSC9, EXOSC5-EXOSC8 and EXOSC6-EXOSC7, and a cap ring consisting of EXOSC1, EXOSC2 and EXOSC3. The RNA exosome complex associates with cofactors C1D/RRP47, MPHOSPH6/MPP6 and MTREX/MTR4. Interacts (via C-terminus region) with SETX (via N-terminus domain); the interaction enhances SETX sumoylation. Interacts with DIS3; the interaction is direct.

The protein localises to the cytoplasm. It localises to the nucleus. Its subcellular location is the nucleolus. The protein resides in the nucleoplasm. Its function is as follows. Non-catalytic component of the RNA exosome complex which has 3'-&gt;5' exoribonuclease activity and participates in a multitude of cellular RNA processing and degradation events. In the nucleus, the RNA exosome complex is involved in proper maturation of stable RNA species such as rRNA, snRNA and snoRNA, in the elimination of RNA processing by-products and non-coding 'pervasive' transcripts, such as antisense RNA species and promoter-upstream transcripts (PROMPTs), and of mRNAs with processing defects, thereby limiting or excluding their export to the cytoplasm. The RNA exosome may be involved in Ig class switch recombination (CSR) and/or Ig variable region somatic hypermutation (SHM) by targeting AICDA deamination activity to transcribed dsDNA substrates. In the cytoplasm, the RNA exosome complex is involved in general mRNA turnover and specifically degrades inherently unstable mRNAs containing AU-rich elements (AREs) within their 3' untranslated regions, and in RNA surveillance pathways, preventing translation of aberrant mRNAs. It seems to be involved in degradation of histone mRNA. The catalytic inactive RNA exosome core complex of 9 subunits (Exo-9) is proposed to play a pivotal role in the binding and presentation of RNA for ribonucleolysis, and to serve as a scaffold for the association with catalytic subunits and accessory proteins or complexes. EXOSC9 binds to ARE-containing RNAs. This chain is Exosome complex component RRP45 (Exosc9), found in Rattus norvegicus (Rat).